An 863-amino-acid chain; its full sequence is Oleate activated transcription factor 3 (863 aa).

The segment at residues 18–47 (VCTNCKKRKSKCDRTKPCGTCVRLGDVDSC) is a DNA-binding region (zn(2)-C6 fungal-type). A compositionally biased stretch (polar residues) spans 52–63 (DSSGQPESSPSL). Residues 52 to 99 (DSSGQPESSPSLNDADPLRKQSTPAERISPGFIKKRRSSQTRQDEDHW) are disordered.

It belongs to the OAF3 family.

The protein resides in the cytoplasm. Its subcellular location is the nucleus. It is found in the mitochondrion. In terms of biological role, transcriptional inhibitor with a significantly increased number of target genes in response to oleate. This is Oleate activated transcription factor 3 (OAF3) from Saccharomyces cerevisiae (strain ATCC 204508 / S288c) (Baker's yeast).